Consider the following 55-residue polypeptide: Large ribosomal subunit protein bL33A (55 aa).

It belongs to the bacterial ribosomal protein bL33 family.

In Rhodococcus jostii (strain RHA1), this protein is Large ribosomal subunit protein bL33A.